A 223-amino-acid chain; its full sequence is NADH-quinone oxidoreductase subunit C (223 aa).

The protein belongs to the complex I 30 kDa subunit family. As to quaternary structure, NDH-1 is composed of 14 different subunits. Subunits NuoB, C, D, E, F, and G constitute the peripheral sector of the complex.

It localises to the cell inner membrane. It catalyses the reaction a quinone + NADH + 5 H(+)(in) = a quinol + NAD(+) + 4 H(+)(out). Its function is as follows. NDH-1 shuttles electrons from NADH, via FMN and iron-sulfur (Fe-S) centers, to quinones in the respiratory chain. The immediate electron acceptor for the enzyme in this species is believed to be ubiquinone. Couples the redox reaction to proton translocation (for every two electrons transferred, four hydrogen ions are translocated across the cytoplasmic membrane), and thus conserves the redox energy in a proton gradient. The polypeptide is NADH-quinone oxidoreductase subunit C (Hydrogenovibrio crunogenus (strain DSM 25203 / XCL-2) (Thiomicrospira crunogena)).